The primary structure comprises 216 residues: MRLGILGGTFNPIHNAHLRIAEEARDLYELDRVVFIPAATPPHKPLVGELSFASRLEMVRLAVADNSGFMVSDMEGVRGGRSYSIDTLRELKAEHPDDELFFIVGADSFNDISTWKEYAAIFGLCNVISVQRPGSTITSLAEVLPVAIAGEFCYDPAANRLNHCSGHAVYALDGVLLDISSSHIRLLVQGGRSIRYLIPDAVEQYIKEQRLYVDAR.

It belongs to the NadD family.

The catalysed reaction is nicotinate beta-D-ribonucleotide + ATP + H(+) = deamido-NAD(+) + diphosphate. The protein operates within cofactor biosynthesis; NAD(+) biosynthesis; deamido-NAD(+) from nicotinate D-ribonucleotide: step 1/1. Catalyzes the reversible adenylation of nicotinate mononucleotide (NaMN) to nicotinic acid adenine dinucleotide (NaAD). The chain is Probable nicotinate-nucleotide adenylyltransferase from Geobacter sp. (strain M21).